Here is a 476-residue protein sequence, read N- to C-terminus: MIKTLFIILLCGILSACQPVDIQDVDIAAPAPKRTVLKVGTLYGPQIYLNSEQGESGFDFEMAQRFADYLAVPLEMIPYTNRKQLFAALKENKIDIIAAGIAKTPNRSQQFKLGPTLYKVNQVLVYKEGTPEPKDISTLSGEITVMANSSSVNTLTKLQKDYPELMWNQVNDKDNEELFALIANGELNYTISDSNSLLINQRFLPELRAGMILEEKVEVVWLLPPNNSDRLMSKLLAFWHKERRAGTLEHLNEKYFGHVKRFDYVDTRAFIRAIDNILPEYRSFFEEYSGELDWRKLAAASYQESHWNPSARSPTGVRGMMMLTQPTAAYVGVDDRLDAEQSIRGGAFYLKDMMERLPDTISEAQRIWFALASYNIGLGHVEDARRLTESMGMDPSAWRDVKKVLPLLQQSKYYKQTRYGYARGSEAVHYVDSIRRYYDTLVWIDNQTKTMEIIEEKEQVEVIAEEVPAKSHVSAQ.

An N-terminal signal peptide occupies residues 1 to 16 (MIKTLFIILLCGILSA). The non-LT domain stretch occupies residues 17 to 259 (CQPVDIQDVD…HLNEKYFGHV (243 aa)). Positions 260–476 (KRFDYVDTRA…VPAKSHVSAQ (217 aa)) are LT domain. Residue Glu304 is part of the active site.

This sequence in the N-terminal section; belongs to the bacterial solute-binding protein 3 family. In the C-terminal section; belongs to the transglycosylase Slt family.

Its subcellular location is the cell outer membrane. It carries out the reaction Exolytic cleavage of the (1-&gt;4)-beta-glycosidic linkage between N-acetylmuramic acid (MurNAc) and N-acetylglucosamine (GlcNAc) residues in peptidoglycan, from either the reducing or the non-reducing ends of the peptidoglycan chains, with concomitant formation of a 1,6-anhydrobond in the MurNAc residue.. In terms of biological role, murein-degrading enzyme that degrades murein glycan strands and insoluble, high-molecular weight murein sacculi, with the concomitant formation of a 1,6-anhydromuramoyl product. Lytic transglycosylases (LTs) play an integral role in the metabolism of the peptidoglycan (PG) sacculus. Their lytic action creates space within the PG sacculus to allow for its expansion as well as for the insertion of various structures such as secretion systems and flagella. The sequence is that of Membrane-bound lytic murein transglycosylase F from Shewanella frigidimarina (strain NCIMB 400).